We begin with the raw amino-acid sequence, 192 residues long: uncharacterized protein (192 aa).

This is an uncharacterized protein from Picosynechococcus sp. (strain ATCC 27264 / PCC 7002 / PR-6) (Agmenellum quadruplicatum).